Here is a 309-residue protein sequence, read N- to C-terminus: Clotting factor G beta subunit (309 aa).

An N-terminal signal peptide occupies residues 1-31 (MDISFLVFITLSMALFSSNVTGTSVTSRVRR). 4 disulfides stabilise this stretch: Cys38-Cys158, Cys74-Cys90, Cys205-Cys227, and Cys238-Cys268. Residues 47-292 (IIGGGIATPH…YVNWLQEITF (246 aa)) enclose the Peptidase S1 domain. His89 serves as the catalytic Charge relay system. N-linked (GlcNAc...) asparagine glycosylation is present at Asn100. Catalysis depends on Asp138, which acts as the Charge relay system. A glycan (N-linked (GlcNAc...) asparagine) is linked at Asn206. The Charge relay system role is filled by Ser242.

It belongs to the peptidase S1 family. Clotting factor G is a heterodimer composed of two non-covalently associated subunits, alpha and beta. Upon activation, converted to a two-chain active form linked by a disulfide bond. Forms a covalent heterodimer with intracellular coagulation inhibitor 3/LICI-3. In terms of tissue distribution, expressed in the hemocytes (at protein level).

It catalyses the reaction Selective cleavage of 98-Arg-|-Ile-99 bond in Limulus proclotting enzyme to form active clotting enzyme.. Its activity is regulated as follows. Binding to (1-&gt;3)-beta-D-glucan to alpha subunit, induces autocatalysis and activation of beta subunit. Inhibited by intracellular coagulation inhibitor 3/LICI-3 and to a lesser extend by intracellular coagulation inhibitor 2/LICI-2. Functionally, component of the heterodimer clotting factor G which may play a role in defense mechanisms against fungi. Initiates a (1-&gt;3)-beta-glucan-sensing clotting pathway whereby the alpha subunit binds to glucans containing (1-&gt;3)-beta linkages, which are components of the fungal cell wall, and the beta subunit catalyzes the activation of proclotting enzyme. This is Clotting factor G beta subunit from Tachypleus tridentatus (Japanese horseshoe crab).